We begin with the raw amino-acid sequence, 250 residues long: Transmembrane protein 106C (250 aa).

The segment at 1–25 (MGSQHSAAARPSSCRRKQEDDRDGL) is disordered. A lipid anchor (N-myristoyl glycine) is attached at glycine 2. A compositionally biased stretch (basic and acidic residues) spans 16 to 25 (RKQEDDRDGL). A helical transmembrane segment spans residues 87-107 (YVLLSILLCLLASGLVVFFLF). 2 N-linked (GlcNAc...) asparagine glycosylation sites follow: asparagine 173 and asparagine 186. Residues 197–217 (FSYVYFFCTVPEILVHNIVIF) traverse the membrane as a helical segment.

It belongs to the TMEM106 family. Interacts with TMEM106B.

The protein resides in the endoplasmic reticulum membrane. Its subcellular location is the membrane. The polypeptide is Transmembrane protein 106C (TMEM106C) (Homo sapiens (Human)).